The primary structure comprises 167 residues: Mannose-specific lectin (167 aa).

The first 24 residues, M1 to A24, serve as a signal peptide directing secretion. In terms of domain architecture, Bulb-type lectin spans D25–F138. Residues C53 and C76 are joined by a disulfide bond.

Homotetramer. As to expression, expressed in the pseudobulb, with highest levels of expression in the non-swollen internode (at protein level).

It localises to the secreted. In terms of biological role, mannose-specific lectin. Shows agglutinating activity towards chicken erythrocytes. Has antifungal activity against A.alternata and Collectotrichum species. This is Mannose-specific lectin from Dendrobium findlayanum (Findlay's orchid).